The primary structure comprises 554 residues: Exodeoxyribonuclease 7 large subunit (554 aa).

Belongs to the XseA family. In terms of assembly, heterooligomer composed of large and small subunits.

It is found in the cytoplasm. It catalyses the reaction Exonucleolytic cleavage in either 5'- to 3'- or 3'- to 5'-direction to yield nucleoside 5'-phosphates.. Its function is as follows. Bidirectionally degrades single-stranded DNA into large acid-insoluble oligonucleotides, which are then degraded further into small acid-soluble oligonucleotides. This is Exodeoxyribonuclease 7 large subunit from Chlamydia pneumoniae (Chlamydophila pneumoniae).